The primary structure comprises 442 residues: 23S rRNA (uracil(1939)-C(5))-methyltransferase RlmD (442 aa).

One can recognise a TRAM domain in the interval 12–70 (SKQLSAKVTLEVTKLDHLGAGMAQHQGKIVFIPGALPNEKVTVQLTEQKKRHARAKLLK). [4Fe-4S] cluster-binding residues include cysteine 83, cysteine 89, cysteine 92, and cysteine 171. S-adenosyl-L-methionine contacts are provided by glutamine 276, phenylalanine 305, asparagine 310, glutamate 326, aspartate 353, and aspartate 373. The Nucleophile role is filled by cysteine 399.

This sequence belongs to the class I-like SAM-binding methyltransferase superfamily. RNA M5U methyltransferase family. RlmD subfamily.

The catalysed reaction is uridine(1939) in 23S rRNA + S-adenosyl-L-methionine = 5-methyluridine(1939) in 23S rRNA + S-adenosyl-L-homocysteine + H(+). Catalyzes the formation of 5-methyl-uridine at position 1939 (m5U1939) in 23S rRNA. This chain is 23S rRNA (uracil(1939)-C(5))-methyltransferase RlmD, found in Shewanella sediminis (strain HAW-EB3).